Reading from the N-terminus, the 316-residue chain is Bifunctional peptidase and (3S)-lysyl hydroxylase JMJD7 (316 aa).

A Cysteine sulfenic acid (-SOH) modification is found at C19. The 2-oxoglutarate site is built by Y123 and T172. Residue Y123 coordinates succinate. In terms of domain architecture, JmjC spans 124 to 310 (IQKQNSNLSV…YCYYRMLEQM (187 aa)). Fe cation contacts are provided by H175 and D177. N181, Y183, and K190 together coordinate 2-oxoglutarate. Residues Y183 and K190 each contribute to the succinate site. H278 is a Fe cation binding site. W292 contributes to the 2-oxoglutarate binding site.

As to quaternary structure, homodimer; disulfide-linked. It depends on Fe(2+) as a cofactor. As to expression, expressed in the pars intercerebralis and fan-shaped body, regions known to be involved in sleep.

The protein localises to the nucleus. The protein resides in the cytoplasm. The enzyme catalyses L-lysyl-[protein] + 2-oxoglutarate + O2 = (3S)-3-hydroxy-L-lysyl-[protein] + succinate + CO2. Functionally, bifunctional enzyme that acts both as an endopeptidase and 2-oxoglutarate-dependent monooxygenase. Endopeptidase that cleaves histones N-terminal tails at the carboxyl side of methylated arginine or lysine residues, to generate 'tailless nucleosomes', which may trigger transcription elongation. Hydroxylates the guanylate binding protein 128up. May be involved in regulation of behavior and circadian rhythms. This is Bifunctional peptidase and (3S)-lysyl hydroxylase JMJD7 from Drosophila melanogaster (Fruit fly).